Here is a 417-residue protein sequence, read N- to C-terminus: Adrenocortical dysplasia protein homolog (417 aa).

The short motif at 11–13 (PWI) is the PWI element. S25 is subject to Phosphoserine. Residues 156–245 (ESASSSAGLT…SSIDSSQKAQ (90 aa)) are interaction with POT1. Composition is skewed to polar residues over residues 237-250 (SIDSSQKAQENPAS) and 259-292 (SGASVSLLSALPTSDPGQKDNSQPPPTVCSTSPR). The segment at 237 to 309 (SIDSSQKAQE…PCSSTPSSPL (73 aa)) is disordered. Over residues 296–309 (PSSTPCSSTPSSPL) the composition is skewed to low complexity. A phosphoserine mark is found at S313 and S317. K348 participates in a covalent cross-link: Glycyl lysine isopeptide (Lys-Gly) (interchain with G-Cter in SUMO2).

Component of the shelterin complex (telosome) composed of TERF1, TERF2, TINF2, TERF2IP ACD and POT1. Forms heterodimers with POT1. Identified in a complex with POT1 and single-stranded telomeric DNA. Interacts with STN1 and TINF2.

It localises to the nucleus. The protein resides in the chromosome. The protein localises to the telomere. In terms of biological role, component of the shelterin complex (telosome) that is involved in the regulation of telomere length and protection. Shelterin associates with arrays of double-stranded TTAGGG repeats added by telomerase and protects chromosome ends. Without its protective activity, telomeres are no longer hidden from the DNA damage surveillance and chromosome ends are inappropriately processed by DNA repair pathways. Promotes binding of POT1 to single-stranded telomeric DNA. Modulates the inhibitory effects of POT1 on telomere elongation. The ACD-POT1 heterodimer enhances telomere elongation by recruiting telomerase to telomeres and increasing its processivity. May play a role in organogenesis. In Rattus norvegicus (Rat), this protein is Adrenocortical dysplasia protein homolog.